The following is a 129-amino-acid chain: Succinate dehydrogenase subunit 3-1, mitochondrial (129 aa).

Residues 1–58 (MEKYHSNSRFAPFRDAPFALRGALGSSGSSFSSIDSLRRSSTLEQARGYTSRPLGAVR) constitute a mitochondrion transit peptide. Over residues 25–35 (GSSGSSFSSID) the composition is skewed to low complexity. The segment at 25–80 (GSSGSSFSSIDSLRRSSTLEQARGYTSRPLGAVRPKMLPSGCRPLHTSHPLSAPVA) is disordered. His-87 contacts heme. The chain crosses the membrane as a helical span at residues 105–127 (IFGAALGAAIISIPLATKFSLMF).

Component of complex II composed of eight subunits in plants: four classical SDH subunits SDH1, SDH2, SDH3 and SDH4 (a flavoprotein (FP), an iron-sulfur protein (IP), and a cytochrome b composed of a large and a small subunit.), as well as four subunits unknown in mitochondria from bacteria and heterotrophic eukaryotes. Heme serves as cofactor.

It localises to the mitochondrion inner membrane. Its pathway is carbohydrate metabolism; tricarboxylic acid cycle. Functionally, membrane-anchoring subunit of succinate dehydrogenase (SDH). This Oryza sativa subsp. japonica (Rice) protein is Succinate dehydrogenase subunit 3-1, mitochondrial.